Here is a 341-residue protein sequence, read N- to C-terminus: Terpene synthase 9 (341 aa).

The DDxx(x)D/E motif motif lies at 81–86 (DDILDS). Residues 222-230 (NDMASYCKE) carry the NDxxSxxxD/E motif motif.

This sequence belongs to the terpene synthase family.

The catalysed reaction is (2E,6E)-farnesyl diphosphate = (1S,2S,4R)-beta-elemene + diphosphate. It catalyses the reaction (2E,6E)-farnesyl diphosphate = germacrene D + diphosphate. Its function is as follows. Terpene synthase that converts its substrate farnesyl diphosphate (FPP) into the sesquiterpenes beta-elemene, germacrene D and a yet unidentified sesquiterpene. This is Terpene synthase 9 from Dictyostelium purpureum (Slime mold).